A 1104-amino-acid polypeptide reads, in one-letter code: Protein KIBRA (1104 aa).

WW domains lie at 6–39 (LPLPEGWEEARDFDGKVYYIDHRNRTTSWIDPRD) and 53–86 (DELPLGWEEAYDPQVGDYFIDHNTKTTQIEDPRV). The stretch at 107-193 (LSAQKEIYQV…ELQFKERGFQ (87 aa)) forms a coiled coil. Residue serine 141 is modified to Phosphoserine. Disordered regions lie at residues 429 to 449 (SMQSLSSGSSPGSLTSSRGSL) and 509 to 547 (TQKAEGGSRLQALRSLSGTPRSMTSLSPRSSLSSPSPPC). The segment covering 527 to 542 (TPRSMTSLSPRSSLSS) has biased composition (low complexity). Serine 535 is subject to Phosphoserine. Serine 542 is subject to Phosphoserine; by CDK1. One can recognise a C2 domain in the interval 659 to 782 (GATRVQIALK…RSGERSTRWY (124 aa)). The interval 822 to 949 (LEKRQEGRSS…DSSTLSKKPP (128 aa)) is disordered. The tract at residues 836 to 1104 (EGSWTYEEEA…NIPALSADDV (269 aa)) is interaction with histone H3. Positions 841–862 (YEEEASENEAVAEEEEEGEEDV) are enriched in acidic residues. 3 positions are modified to phosphoserine: serine 887, serine 891, and serine 919. A compositionally biased stretch (polar residues) spans 916–930 (IIRSKTFSPGPQSQY). Phosphothreonine is present on threonine 921. Residue serine 923 is modified to Phosphoserine; by CDK1. Residue serine 939 is modified to Phosphoserine. Interaction with PRKCZ regions lie at residues 945-988 (SKKP…LDLQ) and 948-967 (PPFVRNSLERRSVRMKRPSS). Phosphoserine; by PKC/PRKCZ is present on residues serine 967 and serine 970. The stretch at 994–1024 (HSQLTQEISVLKELKEHLEQAKNHGEKELPQ) forms a coiled coil. Positions 1102 to 1104 (DDV) match the ADDV motif motif.

It belongs to the WWC family. KIBRA subfamily. Homodimer. Forms heterodimers with WWC2 and WWC3. Interacts with DDN. Interacts with DYNLL1 and histone H3. The interaction with DYNLL1 is mandatory for the recruitment and transactivation functions of ESR1 or DYNLL1 to the target chromatin and the interaction with histone H3 ensures proper regulatory interaction of WWC1-DYNLL1-ESR1 complexes with target chromatin. Interacts (via WW domains) with DDR1 (via PPxY motif) in a collagen-regulated manner. Interacts with PRKCZ (via the protein kinase domain). Forms a tripartite complex with DDR1 and PRKCZ, but predominantly in the absence of collagen. Interacts (via the ADDV motif) with PATJ (via PDZ domain 8). Interacts (via WW domains) with SYNPO (via PPxY motifs). Interacts with NF2 and SNX4. Interacts with CCDC141; retains AMPAR in the cytosol after internalization. Interacts with DLC1 and PRKCZ. Interacts (via WW domains) with LATS1 and LATS2. Post-translationally, phosphorylation at Ser-542 and Ser-923 by CDK1 in response to spindle damage stress regulates mitotic exit, these two sites are dephosphorylated by CDC14B. Mammary epithelium.

Its subcellular location is the cytoplasm. The protein resides in the perinuclear region. It is found in the nucleus. The protein localises to the cell projection. It localises to the ruffle membrane. Its subcellular location is the cytosol. Its function is as follows. Regulator of the Hippo signaling pathway, also known as the Salvador-Warts-Hippo (SWH) pathway. Enhances phosphorylation of LATS1 and YAP1 and negatively regulates cell proliferation and organ growth due to a suppression of the transcriptional activity of YAP1, the major effector of the Hippo pathway. Along with NF2 can synergistically induce the phosphorylation of LATS1 and LATS2 and function in the regulation of Hippo signaling pathway. Acts as a transcriptional coactivator of ESR1 which plays an essential role in DYNLL1-mediated ESR1 transactivation. Modulates directional migration of podocytes. May be associated with memory performance. Regulates collagen-stimulated activation of the ERK/MAPK cascade. Plays an important role in regulating AMPA-selective glutamate receptors (AMPARs) trafficking. The chain is Protein KIBRA (Wwc1) from Mus musculus (Mouse).